The following is a 178-amino-acid chain: Interleukin-10 (178 aa).

Residues 1–18 (MHSSALLCCLVFLTGVRA) form the signal peptide. Intrachain disulfides connect Cys30–Cys126 and Cys80–Cys132. Asn134 is a glycosylation site (N-linked (GlcNAc...) asparagine).

Belongs to the IL-10 family. As to quaternary structure, homodimer. Interacts with IL10RA and IL10RB.

It is found in the secreted. Its function is as follows. Major immune regulatory cytokine that acts on many cells of the immune system where it has profound anti-inflammatory functions, limiting excessive tissue disruption caused by inflammation. Mechanistically, IL10 binds to its heterotetrameric receptor comprising IL10RA and IL10RB leading to JAK1 and STAT2-mediated phosphorylation of STAT3. In turn, STAT3 translocates to the nucleus where it drives expression of anti-inflammatory mediators. Targets antigen-presenting cells (APCs) such as macrophages and monocytes and inhibits their release of pro-inflammatory cytokines including granulocyte-macrophage colony-stimulating factor /GM-CSF, granulocyte colony-stimulating factor/G-CSF, IL-1 alpha, IL-1 beta, IL-6, IL-8 and TNF-alpha. Also interferes with antigen presentation by reducing the expression of MHC-class II and co-stimulatory molecules, thereby inhibiting their ability to induce T cell activation. In addition, controls the inflammatory response of macrophages by reprogramming essential metabolic pathways including mTOR signaling. This Saimiri sciureus (Common squirrel monkey) protein is Interleukin-10 (IL10).